Here is a 506-residue protein sequence, read N- to C-terminus: Maturase K (506 aa).

The protein belongs to the intron maturase 2 family. MatK subfamily.

The protein resides in the plastid. It localises to the chloroplast. Functionally, usually encoded in the trnK tRNA gene intron. Probably assists in splicing its own and other chloroplast group II introns. The protein is Maturase K of Empetrum nigrum (Black crowberry).